A 127-amino-acid polypeptide reads, in one-letter code: Small ribosomal subunit protein bS6 (127 aa).

Residues 104–127 (QGAEKGKSSRKEKVAAEAEASEEA) form a disordered region. Over residues 107–119 (EKGKSSRKEKVAA) the composition is skewed to basic and acidic residues.

It belongs to the bacterial ribosomal protein bS6 family.

Binds together with bS18 to 16S ribosomal RNA. The protein is Small ribosomal subunit protein bS6 of Coxiella burnetii (strain CbuG_Q212) (Coxiella burnetii (strain Q212)).